The sequence spans 43 residues: LLRRKSHDHAQNHDGDKCLRGASLGYYQSFLNQYKPQCILNKP.

The Peptidase M12B domain maps to 1 to 43 (LLRRKSHDHAQNHDGDKCLRGASLGYYQSFLNQYKPQCILNKP). Position 13 (His13) interacts with Zn(2+).

It belongs to the venom metalloproteinase (M12B) family. P-I subfamily. In terms of assembly, monomer. The cofactor is Zn(2+). Post-translationally, this protein autoproteolytically degrades to 10 kDa and 14 kDa fragments in the presence of SDS. Interestingly, the two fragments, as well as reduced crotalin are able to bind vWF, indicating that the binding activity does not require a specific protein conformation. In terms of tissue distribution, expressed by the venom gland.

The protein resides in the secreted. Snake venom zinc metalloproteinase that inhibits ristocin-induced platelet aggregation by abolishing the binding of von Willebrand factor (vWF) to platelet glycoprotein Ib alpha (GPIBA) through the cleavage of both GP1BA and vWF. Also has fibrinogenolytic activities by degrading the alpha- (FGA) and beta-chain (FGB) of fibrinogen. In vivo, induces a slight hemorrhage when applied to chick chorioallantoic membrane and has potent antithrombic effect. In Crotalus atrox (Western diamondback rattlesnake), this protein is Snake venom metalloproteinase crotalin.